The following is a 616-amino-acid chain: Zinc metalloproteinase-disintegrin-like VLAIP-A (616 aa).

Residues 1-20 (MMQVLLVTISLAVFPYQGSS) form the signal peptide. A propeptide spanning residues 21–194 (IILESGNVND…KASQLNLTPE (174 aa)) is cleaved from the precursor. Position 195 is a pyrrolidone carboxylic acid (Gln195). The Peptidase M12B domain maps to 203 to 399 (KYIKLVIVAD…KMPQCILNKP (197 aa)). 3 disulfide bridges follow: Cys314/Cys394, Cys354/Cys378, and Cys356/Cys361. His339 is a binding site for Zn(2+). The active site involves Glu340. Zn(2+) contacts are provided by His343 and His349. Residue Asn377 is glycosylated (N-linked (GlcNAc...) asparagine). The Disintegrin domain occupies 407–493 (PAVCGNYLVE…ECPTDQFQRN (87 aa)). Val409, Asn412, Leu414, Glu416, Glu419, and Asp422 together coordinate Ca(2+). Disulfide bonds link Cys410-Cys439, Cys421-Cys434, Cys423-Cys429, Cys433-Cys456, Cys447-Cys453, Cys452-Cys478, Cys465-Cys485, Cys472-Cys504, Cys497-Cys509, Cys516-Cys566, Cys531-Cys577, Cys544-Cys554, Cys561-Cys603, and Cys597-Cys609. The D/ECD-tripeptide signature appears at 471–473 (ECD).

This sequence belongs to the venom metalloproteinase (M12B) family. P-III subfamily. P-IIIc sub-subfamily. Heterodimer; disulfide-linked. Zn(2+) serves as cofactor. In terms of processing, the N-terminus is blocked. Expressed by the venom gland.

It is found in the secreted. Its activity is regulated as follows. Inhibited by EDTA or 1,10-phenanthroline. Not inhibited by PMSF. In terms of biological role, snake venom zinc metalloprotease that hydrolyzes the alpha-chain (FGA) and more slowly the beta-chain (FGB) of fibrinogen, without affecting the gamma-chain. Cleaves alpha-chain of fibrinogen at '432-Lys-|-Leu-433' and '535-Pro-|-Met-536' bonds. Induces apoptosis in vascular endothelial cells and inhibits endothelial cell adhesion to extracellular matrix proteins such as fibrinogen, fibronectin, vitronectin, collagen I, and collagen IV. Also hydrolyzes azocasein, and insulin B-chain (at the '38-Ala-|-Leu-39' bond). The sequence is that of Zinc metalloproteinase-disintegrin-like VLAIP-A from Macrovipera lebetinus (Levantine viper).